The sequence spans 507 residues: Phosphoprotein (507 aa).

Positions 1 to 48 are interaction with N0; the sequence is MAEEQARHVKNGLECIRALKAEPIGSLAIEEAMAAWSEISDNPGQERA. Disordered stretches follow at residues 41–99, 134–163, 201–231, and 250–273; these read DNPG…PPRN, GLDG…TEGY, NNFP…IKKG, and GATQ…GNVP. Ser86 is subject to Phosphoserine. Over residues 134-145 the composition is skewed to low complexity; that stretch reads GLDGDSTLSGGD. The span at 146 to 160 shows a compositional bias: acidic residues; the sequence is NESENSDVDIGEPDT. Residue Ser151 is modified to Phosphoserine. Positions 260 to 270 are enriched in low complexity; the sequence is SEPSGPGAPAG. Residues 304 to 376 form a multimerization region; it reads GDYYDDELFS…LSSIMIAIPG (73 aa). 2 interaction with the L polymerase regions span residues 361–377 and 396–410; these read STLE…IPGL and PIIG…AEVL. Residues 457–507 are x domain (XD); the sequence is GPASRSVIRSIIKSSRLEEDRKRYLMTLLDDIKGANDLAKFHQMLMKIIMK. The interval 459–507 is interaction with the nucleocapsid (N-RNA); it reads ASRSVIRSIIKSSRLEEDRKRYLMTLLDDIKGANDLAKFHQMLMKIIMK.

The protein belongs to the morbillivirus P protein family. As to quaternary structure, homotetramer. Interacts (via multimerization domain and XD domain) with polymerase L; this interaction forms the polymerase L-P complex. Interacts (via N-terminus) with N0 (via Ncore); this interaction allows P to chaperon N0 to avoid N polymerization and non-specific RNA binding before encapsidation. Interacts (via C-terminus) with N-RNA template (via Ntail); this interaction maintains the P/L complex anchored to the nucleocapsid template during the sequential transcription. Interacts (via C-terminus) with protein C this interaction allows C to associate with the ribonucleocapsid. Phosphorylation on serines by host CK2 is necessary for the formation of viral factories.

In terms of biological role, essential cofactor of the RNA polymerase L that plays a central role in the transcription and replication by forming the polymerase complex with RNA polymerase L and recruiting L to the genomic N-RNA template for RNA synthesis. Also plays a central role in the encapsidation of nascent RNA chains by forming the encapsidation complex with the nucleocapsid protein N (N-P complex). Acts as a chaperone for newly synthesized free N protein, so-called N0, allowing encapsidation of nascent RNA chains during replication. The nucleoprotein protein N prevents excessive phosphorylation of P, which leads to down-regulation of viral transcription/ replication. Participates, together with N, in the formation of viral factories (viroplasms), which are large inclusions in the host cytoplasm where replication takes place. This Measles virus (strain Edmonston) (MeV) protein is Phosphoprotein (P/V).